The chain runs to 47 residues: Large ribosomal subunit protein bL34 (47 aa).

Positions 1-47 (MVTEGLKPHISIKKKKRKSGFLARMRTKSGRKIIARRRRKGRKRLAP) are disordered. Residues 10–47 (ISIKKKKRKSGFLARMRTKSGRKIIARRRRKGRKRLAP) show a composition bias toward basic residues.

The protein belongs to the bacterial ribosomal protein bL34 family.

The chain is Large ribosomal subunit protein bL34 (rpmH) from Aquifex aeolicus (strain VF5).